The sequence spans 337 residues: MRVLGIETSCDETGIAIYDDENGLLANQLYSQVKLHADYGGVVPELASRDHVRKTVPLIQAAIKEAGLTAKDIDAVAYTAGPGLVGALLVGATVGRALAFAWDVPAVPVHHMEGHLLAPMLEDNPPEFPFVALLVSGGHTQLISVTGIGQYELLGESIDDAAGEAFDKTAKLLGLDYPGGPMLSKMAAQGTAGRFTFPRPMTDRPGLDFSFSGLKTFAANTIRDNGTDDQTRADIARAFEDAVVDTLMIKCRRALDQTGFKRLVMAGGVSANRTLRARLAEMMQKRGGEVFYARPEFCTDNGAMIAYAGMVRLKAKGEAGLGVTVRPRWPLSELPAA.

The Fe cation site is built by H111 and H115. Residues 134 to 138 (LVSGG), D167, G180, and N272 contribute to the substrate site. D300 lines the Fe cation pocket.

It belongs to the KAE1 / TsaD family. The cofactor is Fe(2+).

It localises to the cytoplasm. The enzyme catalyses L-threonylcarbamoyladenylate + adenosine(37) in tRNA = N(6)-L-threonylcarbamoyladenosine(37) in tRNA + AMP + H(+). Functionally, required for the formation of a threonylcarbamoyl group on adenosine at position 37 (t(6)A37) in tRNAs that read codons beginning with adenine. Is involved in the transfer of the threonylcarbamoyl moiety of threonylcarbamoyl-AMP (TC-AMP) to the N6 group of A37, together with TsaE and TsaB. TsaD likely plays a direct catalytic role in this reaction. This chain is tRNA N6-adenosine threonylcarbamoyltransferase, found in Cronobacter sakazakii (strain ATCC BAA-894) (Enterobacter sakazakii).